Consider the following 855-residue polypeptide: DNA mismatch repair protein MutS (855 aa).

613 to 620 (GPNMGGKS) serves as a coordination point for ATP. The interval 796–816 (TTSLPHEMPSQQSGKPASPMQ) is disordered.

It belongs to the DNA mismatch repair MutS family.

Its function is as follows. This protein is involved in the repair of mismatches in DNA. It is possible that it carries out the mismatch recognition step. This protein has a weak ATPase activity. In Pseudomonas aeruginosa (strain LESB58), this protein is DNA mismatch repair protein MutS.